We begin with the raw amino-acid sequence, 398 residues long: MDLFEYQARDLFETHGVPVLKGIVASTPEAARKAAEEIGGLTVVKAQVKVGGRGKAGGVRVAPTSAQAFDAADAILGMDIKGHTVNQVMVAQGADIAEEYYFSILLDRANRSYLAMCSVEGGMEIEILAKEKPEALAKVEVDPLTGIDEDKAREIVTAAGFETEVAEKVIPVLIKIWQVYYEEEATLVEVNPLVLTDDGDVIALDGKITLDDNADFRHDNRGALAESAGGLDILELKAKKNDLNYVKLDGSVGIIGNGAGLVMSTLDIVAAAGERHGGQRPANFLDIGGGASAESMAAGLDVILGDSQVRSVFVNVFGGITACDVVAKGIVGALDVLGDQATKPLVVRLDGNNVVEGRRILAEYNHPLVTVVEGMDAAADHAAHLANLAQHGQFATAN.

Residues 9 to 237 (RDLFETHGVP…AGGLDILELK (229 aa)) enclose the ATP-grasp domain. ATP is bound by residues Lys-45, 52 to 54 (GRG), Ala-94, and Glu-99. The Mg(2+) site is built by Asn-191 and Asp-205. Residues Asn-257 and 319-321 (GIT) each bind substrate.

The protein belongs to the succinate/malate CoA ligase beta subunit family. As to quaternary structure, heterotetramer of two alpha and two beta subunits. It depends on Mg(2+) as a cofactor.

The enzyme catalyses succinate + ATP + CoA = succinyl-CoA + ADP + phosphate. The catalysed reaction is GTP + succinate + CoA = succinyl-CoA + GDP + phosphate. It participates in carbohydrate metabolism; tricarboxylic acid cycle; succinate from succinyl-CoA (ligase route): step 1/1. Its function is as follows. Succinyl-CoA synthetase functions in the citric acid cycle (TCA), coupling the hydrolysis of succinyl-CoA to the synthesis of either ATP or GTP and thus represents the only step of substrate-level phosphorylation in the TCA. The beta subunit provides nucleotide specificity of the enzyme and binds the substrate succinate, while the binding sites for coenzyme A and phosphate are found in the alpha subunit. This chain is Succinate--CoA ligase [ADP-forming] subunit beta, found in Corynebacterium glutamicum (strain ATCC 13032 / DSM 20300 / JCM 1318 / BCRC 11384 / CCUG 27702 / LMG 3730 / NBRC 12168 / NCIMB 10025 / NRRL B-2784 / 534).